The following is a 280-amino-acid chain: Ycf3-interacting protein 1, chloroplastic (280 aa).

The transit peptide at 1–62 (MTTQIFQLPL…NNRRFGSLIV (62 aa)) directs the protein to the chloroplast. A disordered region spans residues 75–103 (PVPLTLEQQEKEKQNRDDEEDEIDEGDVD). Over residues 91 to 103 (DDEEDEIDEGDVD) the composition is skewed to acidic residues. A helical membrane pass occupies residues 255–275 (ALYFVSALPVIIGISVVLILF).

Belongs to the Y3IP1/CEST family. In terms of assembly, interacts with Ycf3. Expressed in cotyledons, rosette and cauline leaves, stems and sepals.

The protein localises to the plastid. It is found in the chloroplast thylakoid membrane. Functionally, nuclear genome-encoded factor that participates in photosystem I (PSI) biogenesis. Cooperates with the plastid genome-encoded protein PSI assembly Ycf3 in the assembly of stable PSI units in the thylakoid membrane. Involved in light-induced chloroplast development and growth. Involved in the plant response to abiotic and photooxidative stresses. May be involved in the suppression of photooxidative damage. This chain is Ycf3-interacting protein 1, chloroplastic, found in Arabidopsis thaliana (Mouse-ear cress).